Consider the following 294-residue polypeptide: Light-independent protochlorophyllide reductase iron-sulfur ATP-binding protein (294 aa).

ATP is bound by residues 10–15 and lysine 39; that span reads GIGKST. Residue serine 14 participates in Mg(2+) binding. Residues cysteine 95 and cysteine 129 each contribute to the [4Fe-4S] cluster site. Residue 180–181 coordinates ATP; sequence NR.

The protein belongs to the NifH/BchL/ChlL family. In terms of assembly, homodimer. Protochlorophyllide reductase is composed of three subunits; ChlL, ChlN and ChlB. The cofactor is [4Fe-4S] cluster.

It localises to the plastid. The protein localises to the chloroplast. The enzyme catalyses chlorophyllide a + oxidized 2[4Fe-4S]-[ferredoxin] + 2 ADP + 2 phosphate = protochlorophyllide a + reduced 2[4Fe-4S]-[ferredoxin] + 2 ATP + 2 H2O. The protein operates within porphyrin-containing compound metabolism; chlorophyll biosynthesis (light-independent). Component of the dark-operative protochlorophyllide reductase (DPOR) that uses Mg-ATP and reduced ferredoxin to reduce ring D of protochlorophyllide (Pchlide) to form chlorophyllide a (Chlide). This reaction is light-independent. The L component serves as a unique electron donor to the NB-component of the complex, and binds Mg-ATP. The protein is Light-independent protochlorophyllide reductase iron-sulfur ATP-binding protein of Pleurastrum terricola (Filamentous green alga).